A 303-amino-acid chain; its full sequence is S-methyl-5'-thioadenosine phosphorylase 1 (303 aa).

Residues serine 14, arginine 57–histidine 58, and serine 90–alanine 91 contribute to the phosphate site. Methionine 198 is a binding site for substrate. Residue serine 199 participates in phosphate binding. Aspartate 222–aspartate 224 contacts substrate.

It belongs to the PNP/MTAP phosphorylase family. MTAP subfamily. As to quaternary structure, homotrimer.

Its subcellular location is the cytoplasm. It is found in the nucleus. The catalysed reaction is S-methyl-5'-thioadenosine + phosphate = 5-(methylsulfanyl)-alpha-D-ribose 1-phosphate + adenine. Its pathway is amino-acid biosynthesis; L-methionine biosynthesis via salvage pathway; S-methyl-5-thio-alpha-D-ribose 1-phosphate from S-methyl-5'-thioadenosine (phosphorylase route): step 1/1. Catalyzes the reversible phosphorylation of S-methyl-5'-thioadenosine (MTA) to adenine and 5-methylthioribose-1-phosphate. Involved in the breakdown of MTA, a major by-product of polyamine biosynthesis. Responsible for the first step in the methionine salvage pathway after MTA has been generated from S-adenosylmethionine. Has broad substrate specificity with 6-aminopurine nucleosides as preferred substrates. The sequence is that of S-methyl-5'-thioadenosine phosphorylase 1 from Puccinia graminis f. sp. tritici (strain CRL 75-36-700-3 / race SCCL) (Black stem rust fungus).